The primary structure comprises 421 residues: Zinc chaperone AztD (421 aa).

Positions 1–29 are cleaved as a signal peptide; that stretch reads MMENIMKKRLLSTSISTLLLGLSVMPAFA. Residues H101, H104, D106, H126, H169, H216, and H405 each coordinate Zn(2+). A disulfide bond links C212 and C229. The interval 399 to 421 is disordered; it reads GGSGKVHGEHHDHEAHHHDDHAH. Basic and acidic residues predominate over residues 404–421; sequence VHGEHHDHEAHHHDDHAH. Residues 408 to 419 carry the N-terminal Zn(2+)-binding motif; binds a third Zn(2+) with low affinity motif; sequence HHDHEAHHHDDH.

In terms of assembly, monomer.

The protein localises to the periplasm. In terms of biological role, acts as a zinc chaperone in the AztABCD zinc transport system. Directly transfers one zinc cation to the solute binding protein AztC; the transfer occurs without the formation of a stable interaction. Binds 3 Zn(2+), two with high affinity and one with low affinity, and transfers only Zn(2+) bound to site 2 to AztC. In Citrobacter koseri (strain ATCC BAA-895 / CDC 4225-83 / SGSC4696), this protein is Zinc chaperone AztD.